A 241-amino-acid polypeptide reads, in one-letter code: Probable transcriptional regulatory protein SAR11_0592 (241 aa).

A disordered region spans residues 1-24 (MSGHSKWASIKHSKGKADKQRSKV).

It belongs to the TACO1 family.

It is found in the cytoplasm. This is Probable transcriptional regulatory protein SAR11_0592 from Pelagibacter ubique (strain HTCC1062).